Consider the following 260-residue polypeptide: D-threitol dehydrogenase (260 aa).

Leu-21–Asn-50 is an NAD(+) binding site. Tyr-166 functions as the Proton acceptor in the catalytic mechanism. Lys-170 provides a ligand contact to NAD(+).

It belongs to the short-chain dehydrogenases/reductases (SDR) family.

It catalyses the reaction D-threitol + NAD(+) = D-erythrulose + NADH + H(+). The protein operates within carbohydrate metabolism; D-threitol degradation. Functionally, catalyzes the NAD-dependent reversible oxidation of D-threitol. Involved in the degradation pathway of D-threitol, that allows M.smegmatis to grow on this compound as the sole carbon source. Does not catalyze the oxidation of xylitol, L-sorbitol, and L-sorbose. In Mycolicibacterium smegmatis (strain ATCC 700084 / mc(2)155) (Mycobacterium smegmatis), this protein is D-threitol dehydrogenase.